Consider the following 156-residue polypeptide: Small ribosomal subunit protein uS7 (156 aa).

Belongs to the universal ribosomal protein uS7 family. Part of the 30S ribosomal subunit. Contacts proteins S9 and S11.

Functionally, one of the primary rRNA binding proteins, it binds directly to 16S rRNA where it nucleates assembly of the head domain of the 30S subunit. Is located at the subunit interface close to the decoding center, probably blocks exit of the E-site tRNA. This Desulfosudis oleivorans (strain DSM 6200 / JCM 39069 / Hxd3) (Desulfococcus oleovorans) protein is Small ribosomal subunit protein uS7.